The following is a 185-amino-acid chain: dCTP deaminase (185 aa).

Residues 107 to 112, 131 to 133, glutamine 152, tyrosine 166, and glutamine 176 each bind dCTP; these read KSTYAR and TLE. Glutamate 133 acts as the Proton donor/acceptor in catalysis.

The protein belongs to the dCTP deaminase family. In terms of assembly, homotrimer.

It catalyses the reaction dCTP + H2O + H(+) = dUTP + NH4(+). The protein operates within pyrimidine metabolism; dUMP biosynthesis; dUMP from dCTP (dUTP route): step 1/2. Catalyzes the deamination of dCTP to dUTP. The polypeptide is dCTP deaminase (Anaplasma phagocytophilum (strain HZ)).